We begin with the raw amino-acid sequence, 380 residues long: Cytochrome b (380 aa).

4 helical membrane passes run 34–54 (FGSL…LLAM), 78–99 (WLIR…YLHI), 114–134 (WNTG…GYVL), and 179–199 (FFAL…IHLT). Residues His84 and His98 each coordinate heme b. The heme b site is built by His183 and His197. His202 lines the a ubiquinone pocket. The next 4 membrane-spanning stretches (helical) occupy residues 227–247 (LKDI…ALFS), 289–309 (LGGV…PFLH), 321–341 (LSQL…WVGS), and 348–368 (FIII…ILFP).

It belongs to the cytochrome b family. As to quaternary structure, the cytochrome bc1 complex contains 11 subunits: 3 respiratory subunits (MT-CYB, CYC1 and UQCRFS1), 2 core proteins (UQCRC1 and UQCRC2) and 6 low-molecular weight proteins (UQCRH/QCR6, UQCRB/QCR7, UQCRQ/QCR8, UQCR10/QCR9, UQCR11/QCR10 and a cleavage product of UQCRFS1). This cytochrome bc1 complex then forms a dimer. The cofactor is heme b.

Its subcellular location is the mitochondrion inner membrane. In terms of biological role, component of the ubiquinol-cytochrome c reductase complex (complex III or cytochrome b-c1 complex) that is part of the mitochondrial respiratory chain. The b-c1 complex mediates electron transfer from ubiquinol to cytochrome c. Contributes to the generation of a proton gradient across the mitochondrial membrane that is then used for ATP synthesis. The chain is Cytochrome b (MT-CYB) from Calonectris leucomelas (Streaked shearwater).